We begin with the raw amino-acid sequence, 274 residues long: ATP synthase subunit delta (274 aa).

This sequence belongs to the ATPase delta chain family. In terms of assembly, F-type ATPases have 2 components, F(1) - the catalytic core - and F(0) - the membrane proton channel. F(1) has five subunits: alpha(3), beta(3), gamma(1), delta(1), epsilon(1). F(0) has three main subunits: a(1), b(2) and c(10-14). The alpha and beta chains form an alternating ring which encloses part of the gamma chain. F(1) is attached to F(0) by a central stalk formed by the gamma and epsilon chains, while a peripheral stalk is formed by the delta and b chains.

The protein localises to the cell membrane. Functionally, f(1)F(0) ATP synthase produces ATP from ADP in the presence of a proton or sodium gradient. F-type ATPases consist of two structural domains, F(1) containing the extramembraneous catalytic core and F(0) containing the membrane proton channel, linked together by a central stalk and a peripheral stalk. During catalysis, ATP synthesis in the catalytic domain of F(1) is coupled via a rotary mechanism of the central stalk subunits to proton translocation. In terms of biological role, this protein is part of the stalk that links CF(0) to CF(1). It either transmits conformational changes from CF(0) to CF(1) or is implicated in proton conduction. The sequence is that of ATP synthase subunit delta from Salinispora tropica (strain ATCC BAA-916 / DSM 44818 / JCM 13857 / NBRC 105044 / CNB-440).